Consider the following 381-residue polypeptide: MKRNAFEELRVQLRTLKWLGVLRFTIDFNKCLVRENASEERSAWLYLIGVVGITCSLIVYSTYFPSHFIMGKHNTTGNCYALINIRSCSIVTMLIYTQLYIQRFRFVALLQSILRFNQISGSHREEGRFAFYYYTHLSLLIICMLNYAYGYWTAGVRLTTIPIYLLQYGFSYLFLGQVVVLFACIQQILLSILKYYNQVVLKNIKSSKESREFYYNFCKYNQVIWLSYTEINHCFGLLLLLVTGLILLITPSGPFYLVSTIFEGRFRQNWQFSLMSFTAILWSLPWIVLLVLAMGRNDVQKEANKTAKMLTKVPRTGTGLDRMIEKFLLKNLRQKPILTAYGFFALDKSTLFKLFTAIFTYMVILVQFKEMENSTKSINKF.

At 1–43 (MKRNAFEELRVQLRTLKWLGVLRFTIDFNKCLVRENASEERSA) the chain is on the cytoplasmic side. A helical transmembrane segment spans residues 44–64 (WLYLIGVVGITCSLIVYSTYF). At 65–78 (PSHFIMGKHNTTGN) the chain is on the extracellular side. Asn-74 is a glycosylation site (N-linked (GlcNAc...) asparagine). A helical transmembrane segment spans residues 79–101 (CYALINIRSCSIVTMLIYTQLYI). The Cytoplasmic segment spans residues 102–128 (QRFRFVALLQSILRFNQISGSHREEGR). The helical transmembrane segment at 129–149 (FAFYYYTHLSLLIICMLNYAY) threads the bilayer. Residues 150–172 (GYWTAGVRLTTIPIYLLQYGFSY) lie on the Extracellular side of the membrane. Residues 173-193 (LFLGQVVVLFACIQQILLSIL) form a helical membrane-spanning segment. The Cytoplasmic portion of the chain corresponds to 194–234 (KYYNQVVLKNIKSSKESREFYYNFCKYNQVIWLSYTEINHC). The chain crosses the membrane as a helical span at residues 235–255 (FGLLLLLVTGLILLITPSGPF). Over 256–273 (YLVSTIFEGRFRQNWQFS) the chain is Extracellular. The chain crosses the membrane as a helical span at residues 274 to 294 (LMSFTAILWSLPWIVLLVLAM). At 295–350 (GRNDVQKEANKTAKMLTKVPRTGTGLDRMIEKFLLKNLRQKPILTAYGFFALDKST) the chain is on the cytoplasmic side. Residues 351-371 (LFKLFTAIFTYMVILVQFKEM) form a helical membrane-spanning segment. At 372 to 381 (ENSTKSINKF) the chain is on the extracellular side. An N-linked (GlcNAc...) asparagine glycan is attached at Asn-373.

This sequence belongs to the insect chemoreceptor superfamily. Gustatory receptor (GR) family. Gr21a subfamily. As to expression, expressed in the adult labellar chemosensory neurons and adult thorax and abdomen.

It localises to the cell membrane. Gustatory receptor which mediates acceptance or avoidance behavior, depending on its substrates. Plays a role in sustaining courtship behavior in males, possibly through the reception of a stimulating arrestant pheromone. In Drosophila melanogaster (Fruit fly), this protein is Gustatory and pheromone receptor 39a, isoform D (Gr39a).